Consider the following 600-residue polypeptide: Long-chain-fatty-acid--CoA ligase FadD15 (600 aa).

It belongs to the ATP-dependent AMP-binding enzyme family.

It catalyses the reaction a long-chain fatty acid + ATP + CoA = a long-chain fatty acyl-CoA + AMP + diphosphate. It participates in lipid metabolism; fatty acid biosynthesis. Functionally, catalyzes the activation of long-chain fatty acids as acyl-coenzyme A (acyl-CoA), which are then transferred to the multifunctional polyketide synthase (PKS) type III for further chain extension. The polypeptide is Long-chain-fatty-acid--CoA ligase FadD15 (fadD15) (Mycobacterium bovis (strain ATCC BAA-935 / AF2122/97)).